Here is a 407-residue protein sequence, read N- to C-terminus: 41 kDa spicule matrix protein (407 aa).

A signal peptide spans 1-17; it reads MKGVLFIVASLVAFATG. The C-type lectin domain occupies 29–160; the sequence is SGQSCYRYFN…PGRAPVMKRQ (132 aa). Disordered stretches follow at residues 143 to 176 and 204 to 407; these read PQNP…IPQG and IGQQ…DALA. Residues 223–369 are compositionally biased toward gly residues; that stretch reads NQPGMGGRQP…MGGRQPGMGG (147 aa). A compositionally biased stretch (low complexity) spans 370 to 398; it reads QQPNNPNNPNNPNNPNNPNNPNPRFNRPR.

The protein belongs to the SM50 family. In terms of tissue distribution, expressed specifically in the micromere/primary mesenchyme cells (PMC) lineage.

It is found in the secreted. In terms of biological role, major matrix protein of the sea urchin embryo spicule which directs crystal growth in certain orientations and inhibit growth in others. The sequence is that of 41 kDa spicule matrix protein from Hemicentrotus pulcherrimus (Sea urchin).